Consider the following 200-residue polypeptide: Segregation and condensation protein B (200 aa).

It belongs to the ScpB family. As to quaternary structure, homodimer. Homodimerization may be required to stabilize the binding of ScpA to the Smc head domains. Component of a cohesin-like complex composed of ScpA, ScpB and the Smc homodimer, in which ScpA and ScpB bind to the head domain of Smc. The presence of the three proteins is required for the association of the complex with DNA.

It is found in the cytoplasm. Its function is as follows. Participates in chromosomal partition during cell division. May act via the formation of a condensin-like complex containing Smc and ScpA that pull DNA away from mid-cell into both cell halves. The sequence is that of Segregation and condensation protein B from Lactobacillus delbrueckii subsp. bulgaricus (strain ATCC 11842 / DSM 20081 / BCRC 10696 / JCM 1002 / NBRC 13953 / NCIMB 11778 / NCTC 12712 / WDCM 00102 / Lb 14).